A 383-amino-acid polypeptide reads, in one-letter code: Lipid-A-disaccharide synthase (383 aa).

The protein belongs to the LpxB family.

It catalyses the reaction a lipid X + a UDP-2-N,3-O-bis[(3R)-3-hydroxyacyl]-alpha-D-glucosamine = a lipid A disaccharide + UDP + H(+). It functions in the pathway bacterial outer membrane biogenesis; LPS lipid A biosynthesis. Its function is as follows. Condensation of UDP-2,3-diacylglucosamine and 2,3-diacylglucosamine-1-phosphate to form lipid A disaccharide, a precursor of lipid A, a phosphorylated glycolipid that anchors the lipopolysaccharide to the outer membrane of the cell. The polypeptide is Lipid-A-disaccharide synthase (Trichlorobacter lovleyi (strain ATCC BAA-1151 / DSM 17278 / SZ) (Geobacter lovleyi)).